A 282-amino-acid polypeptide reads, in one-letter code: Bis(5'-nucleosyl)-tetraphosphatase, symmetrical (282 aa).

It belongs to the Ap4A hydrolase family.

The enzyme catalyses P(1),P(4)-bis(5'-adenosyl) tetraphosphate + H2O = 2 ADP + 2 H(+). Its function is as follows. Hydrolyzes diadenosine 5',5'''-P1,P4-tetraphosphate to yield ADP. In Citrobacter koseri (strain ATCC BAA-895 / CDC 4225-83 / SGSC4696), this protein is Bis(5'-nucleosyl)-tetraphosphatase, symmetrical.